A 327-amino-acid chain; its full sequence is MREVMLSECMNLLYESNFVISKPFGRSCFDLIAKKADLKLLIKILKNIDSLSTEQSEELLNIARILQAVPLIIGSRTRNSVMEEGAVYERFGIKAVTFLTFQEQVRGIPPVVYANRGGFFVNIDGKALKETREKLNISVGELAEFSRVSRKTIYKYEQNEANPSAEVAIKIEEYLDVPLIKGINITDYFEGVNLPKSREEAFEKILKEGEDFKVKVIEILGDMGFNLLETTKAPFDAVAEESKNKGDEVHNVLFTNIQETENEEIRKKAIIVDEISKIFNSHSLLILETRKNEDKKIMSMSIRELEKMGDTVDLIDFIEKRKKSKDI.

The HTH cro/C1-type domain occupies Leu-128–Phe-189. The H-T-H motif DNA-binding region spans Val-139–Gln-158.

This is Putative HTH-type transcriptional regulatory protein Mevan_1514 from Methanococcus vannielii (strain ATCC 35089 / DSM 1224 / JCM 13029 / OCM 148 / SB).